A 125-amino-acid polypeptide reads, in one-letter code: Fumarate reductase subunit D (125 aa).

3 helical membrane-spanning segments follow: residues 30 to 50 (FAML…LGVI), 62 to 82 (AFAT…LPMW), and 105 to 125 (VACY…IFMI).

Belongs to the FrdD family. As to quaternary structure, part of an enzyme complex containing four subunits: a flavoprotein (FrdA), an iron-sulfur protein (FrdB), and two hydrophobic anchor proteins (FrdC and FrdD).

The protein localises to the cell inner membrane. In terms of biological role, anchors the catalytic components of the fumarate reductase complex to the cell membrane, binds quinones. In Vibrio parahaemolyticus serotype O3:K6 (strain RIMD 2210633), this protein is Fumarate reductase subunit D.